A 274-amino-acid polypeptide reads, in one-letter code: Large ribosomal subunit protein uL2 (274 aa).

2 disordered regions span residues 28 to 54 and 224 to 274; these read APHA…TRHI and VAMN…RRRK. Positions 263–274 are enriched in basic and acidic residues; it reads KRTDKMIVRRRK.

It belongs to the universal ribosomal protein uL2 family. As to quaternary structure, part of the 50S ribosomal subunit. Forms a bridge to the 30S subunit in the 70S ribosome.

Its function is as follows. One of the primary rRNA binding proteins. Required for association of the 30S and 50S subunits to form the 70S ribosome, for tRNA binding and peptide bond formation. It has been suggested to have peptidyltransferase activity; this is somewhat controversial. Makes several contacts with the 16S rRNA in the 70S ribosome. The protein is Large ribosomal subunit protein uL2 of Pseudomonas savastanoi pv. phaseolicola (strain 1448A / Race 6) (Pseudomonas syringae pv. phaseolicola (strain 1448A / Race 6)).